A 294-amino-acid chain; its full sequence is ATP synthase gamma chain (294 aa).

This sequence belongs to the ATPase gamma chain family. In terms of assembly, F-type ATPases have 2 components, CF(1) - the catalytic core - and CF(0) - the membrane proton channel. CF(1) has five subunits: alpha(3), beta(3), gamma(1), delta(1), epsilon(1). CF(0) has three main subunits: a, b and c.

The protein localises to the cell inner membrane. Functionally, produces ATP from ADP in the presence of a proton gradient across the membrane. The gamma chain is believed to be important in regulating ATPase activity and the flow of protons through the CF(0) complex. The polypeptide is ATP synthase gamma chain (Campylobacter jejuni subsp. jejuni serotype O:23/36 (strain 81-176)).